Reading from the N-terminus, the 106-residue chain is Large ribosomal subunit protein bL21 (106 aa).

It belongs to the bacterial ribosomal protein bL21 family. Part of the 50S ribosomal subunit. Contacts protein L20.

In terms of biological role, this protein binds to 23S rRNA in the presence of protein L20. The sequence is that of Large ribosomal subunit protein bL21 from Chlamydia felis (strain Fe/C-56) (Chlamydophila felis).